We begin with the raw amino-acid sequence, 155 residues long: MVKLRLKRYGKRRQPTYRIVAIESKARREGRPLEELGYYNPRTKETVLETAGLLKWLRCGAQPTDTVDSLLRKAGIYEMLKAGEGGVVAAIRIPAIAKPEAGIPDPAPSTEEPAAVCEASAEMAGQPGEVEPAGAAAEPNSQEPEPEEEKPQVEA.

The tract at residues 100–155 (EAGIPDPAPSTEEPAAVCEASAEMAGQPGEVEPAGAAAEPNSQEPEPEEEKPQVEA) is disordered. A compositionally biased stretch (low complexity) spans 124–143 (AGQPGEVEPAGAAAEPNSQE).

This sequence belongs to the bacterial ribosomal protein bS16 family.

The polypeptide is Small ribosomal subunit protein bS16 (Synechococcus sp. (strain JA-3-3Ab) (Cyanobacteria bacterium Yellowstone A-Prime)).